The chain runs to 288 residues: MSVYRDESPATGLDHLKAALLYPLPHHAISRMVHWAVRVETPWFKNLLIKAFIRVFKVDMSEALEEDPTAYPTFNAFFTRALKPEARPLPDDPDAILSPADGTISQMGPIERDTIFQAKGHSFTTAELLGGDEALAEEFRDGWFATIYLSPRDYHRVHMPMTGTLRQMIHIPGRLFSVAPFTVRTVPKLFARNERVACIFDTDRGPMAVVLVGAINVGSIETVWAGEITPPAGIRAQYSNYEADNAPTIARGHEMGRFNMGSTVITLQNSRPAPGKIMSAHIKQGMTI.

Catalysis depends on charge relay system; for autoendoproteolytic cleavage activity residues Asp-101, His-158, and Ser-262. Ser-262 functions as the Schiff-base intermediate with substrate; via pyruvic acid; for decarboxylase activity in the catalytic mechanism. Ser-262 is subject to Pyruvic acid (Ser); by autocatalysis.

This sequence belongs to the phosphatidylserine decarboxylase family. PSD-B subfamily. Prokaryotic type I sub-subfamily. Heterodimer of a large membrane-associated beta subunit and a small pyruvoyl-containing alpha subunit. Requires pyruvate as cofactor. In terms of processing, is synthesized initially as an inactive proenzyme. Formation of the active enzyme involves a self-maturation process in which the active site pyruvoyl group is generated from an internal serine residue via an autocatalytic post-translational modification. Two non-identical subunits are generated from the proenzyme in this reaction, and the pyruvate is formed at the N-terminus of the alpha chain, which is derived from the carboxyl end of the proenzyme. The autoendoproteolytic cleavage occurs by a canonical serine protease mechanism, in which the side chain hydroxyl group of the serine supplies its oxygen atom to form the C-terminus of the beta chain, while the remainder of the serine residue undergoes an oxidative deamination to produce ammonia and the pyruvoyl prosthetic group on the alpha chain. During this reaction, the Ser that is part of the protease active site of the proenzyme becomes the pyruvoyl prosthetic group, which constitutes an essential element of the active site of the mature decarboxylase.

The protein localises to the cell membrane. The enzyme catalyses a 1,2-diacyl-sn-glycero-3-phospho-L-serine + H(+) = a 1,2-diacyl-sn-glycero-3-phosphoethanolamine + CO2. It participates in phospholipid metabolism; phosphatidylethanolamine biosynthesis; phosphatidylethanolamine from CDP-diacylglycerol: step 2/2. Functionally, catalyzes the formation of phosphatidylethanolamine (PtdEtn) from phosphatidylserine (PtdSer). This Alkalilimnicola ehrlichii (strain ATCC BAA-1101 / DSM 17681 / MLHE-1) protein is Phosphatidylserine decarboxylase proenzyme.